A 154-amino-acid chain; its full sequence is Large ribosomal subunit protein uL13 (154 aa).

This sequence belongs to the universal ribosomal protein uL13 family. In terms of assembly, part of the 50S ribosomal subunit.

Functionally, this protein is one of the early assembly proteins of the 50S ribosomal subunit, although it is not seen to bind rRNA by itself. It is important during the early stages of 50S assembly. The protein is Large ribosomal subunit protein uL13 of Brucella abortus (strain S19).